A 337-amino-acid chain; its full sequence is Ferredoxin--NADP reductase (337 aa).

Asp35, Gln43, Tyr48, Ala88, Phe122, Asp289, and Thr330 together coordinate FAD.

The protein belongs to the ferredoxin--NADP reductase type 2 family. In terms of assembly, homodimer. It depends on FAD as a cofactor.

It catalyses the reaction 2 reduced [2Fe-2S]-[ferredoxin] + NADP(+) + H(+) = 2 oxidized [2Fe-2S]-[ferredoxin] + NADPH. This chain is Ferredoxin--NADP reductase, found in Ehrlichia ruminantium (strain Gardel).